The sequence spans 28 residues: Heat shock protein 81 (28 aa).

Positions 5 and 21 each coordinate ATP.

Belongs to the heat shock protein 90 family. Homodimer.

The protein localises to the cytoplasm. Its function is as follows. Putative molecular chaperone that may promote the maturation, structural maintenance and proper regulation of specific target proteins. The protein is Heat shock protein 81 of Pseudotsuga menziesii (Douglas-fir).